The primary structure comprises 122 residues: Large ribosomal subunit protein uL14 (122 aa).

The protein belongs to the universal ribosomal protein uL14 family. In terms of assembly, part of the 50S ribosomal subunit. Forms a cluster with proteins L3 and L19. In the 70S ribosome, L14 and L19 interact and together make contacts with the 16S rRNA in bridges B5 and B8.

Binds to 23S rRNA. Forms part of two intersubunit bridges in the 70S ribosome. The protein is Large ribosomal subunit protein uL14 of Burkholderia lata (strain ATCC 17760 / DSM 23089 / LMG 22485 / NCIMB 9086 / R18194 / 383).